A 511-amino-acid chain; its full sequence is Cytochrome P450 monooxygenase prhD (511 aa).

An N-linked (GlcNAc...) asparagine glycan is attached at Asn7. The helical transmembrane segment at 10-30 (GNGMGLLIPLGLSWLIWTILL) threads the bilayer. Cys444 is a binding site for heme. An N-linked (GlcNAc...) asparagine glycan is attached at Asn502.

This sequence belongs to the cytochrome P450 family. The cofactor is heme.

The protein localises to the membrane. It participates in secondary metabolite biosynthesis; terpenoid biosynthesis. Functionally, cytochrome P450 monooxygenase; part of the gene cluster that mediates the biosynthesis of paraherquonin, a meroterpenoid with a unique, highly congested hexacyclic molecular architecture. The first step of the pathway is the synthesis of 3,5-dimethylorsellinic acid (DMOA) by the polyketide synthase prhL. Synthesis of DMOA is followed by farnesylation by the prenyltransferase prhE, methylesterification by the methyl-transferase prhM, epoxidation of the prenyl chain by the flavin-dependent monooxygenase prhF, and cyclization of the farnesyl moiety by the terpene cyclase prhH, to yield the tetracyclic intermediate, protoaustinoid A. The short chain dehydrogenase prhI then oxidizes the C-3 alcohol group of the terpene cyclase product to transform protoaustinoid A into protoaustinoid B. The FAD-binding monooxygenase prhJ catalyzes the oxidation of protoaustinoid B into preaustinoid A which is further oxidized into preaustinoid A1 by FAD-binding monooxygenase phrK. Finally, prhA leads to berkeleydione via the berkeleyone B intermediate. PrhA is a multifunctional dioxygenase that first desaturates at C5-C6 to form berkeleyone B, followed by rearrangement of the A/B-ring to form the cycloheptadiene moiety in berkeleydione. Berkeleydione serves as the key intermediate for the biosynthesis of paraherquonin as well as many other meroterpenoids. The cytochrome P450 monooxygenases prhB, prhD, and prhN, as well as the isomerase prhC, are probably involved in the late stage of paraherquonin biosynthesis, after the production of berkeleydione. Especially prhC might be a multifunctional enzyme that catalyzes the D-ring expansion via intramolecular methoxy rearrangement, as well as the hydrolysis of the expanded D-ring. The protein is Cytochrome P450 monooxygenase prhD of Penicillium brasilianum.